Consider the following 571-residue polypeptide: Coenzyme A biosynthesis protein 3 (571 aa).

Disordered regions lie at residues 1 to 72 and 100 to 120; these read MTDE…YKND and INTS…PSLP. A compositionally biased stretch (polar residues) spans 8 to 35; the sequence is SDQNMNGKQGVNLISSLPTTQVPVSILT. The residue at position 42 (Ser42) is a Phosphoserine. A compositionally biased stretch (basic and acidic residues) spans 43–59; the sequence is IHDESNFERSDSHEDQS. Residues 60-72 are compositionally biased toward polar residues; sequence KSNSNRRNIYKND. 3 positions are modified to phosphoserine: Ser116, Ser121, and Ser124. Disordered regions lie at residues 140–171 and 209–244; these read ISNK…LQEQ and IFKE…SMEK. Residues 146 to 171 show a composition bias toward low complexity; that stretch reads KQQQQQEQLQQNQQQEEQQKAQLQEQ. Ser264 is subject to Phosphoserine. The segment at 507–571 is disordered; sequence RDEETGDKEQ…EDEEDVKTEV (65 aa). The span at 516–571 shows a compositional bias: acidic residues; the sequence is QEQEEQEGADNEDDDDEDDEEDEEDEEEEEALNETASDESNDEEDEEDEEDVKTEV.

This sequence belongs to the HFCD (homooligomeric flavin containing Cys decarboxylase) superfamily. As to quaternary structure, component of the phosphopantothenoylcysteine decarboxylase (PPCDC) complex, a heterotrimer composed of CAB3, HAL3 and VHS3.

It is found in the cytoplasm. Component of the phosphopantothenoylcysteine decarboxylase (PPCDC) involved in the coenzyme A synthesis. The sequence is that of Coenzyme A biosynthesis protein 3 (CAB3) from Saccharomyces cerevisiae (strain ATCC 204508 / S288c) (Baker's yeast).